Consider the following 1079-residue polypeptide: DNA-directed RNA polymerase subunit beta (1079 aa).

The interval 963–982 is disordered; the sequence is RSTGPYSRVTQQPVKGRARR. Over residues 966-975 the composition is skewed to polar residues; sequence GPYSRVTQQP.

It belongs to the RNA polymerase beta chain family. As to quaternary structure, in plastids the minimal PEP RNA polymerase catalytic core is composed of four subunits: alpha, beta, beta', and beta''. When a (nuclear-encoded) sigma factor is associated with the core the holoenzyme is formed, which can initiate transcription.

The protein localises to the plastid. The protein resides in the chloroplast. The catalysed reaction is RNA(n) + a ribonucleoside 5'-triphosphate = RNA(n+1) + diphosphate. DNA-dependent RNA polymerase catalyzes the transcription of DNA into RNA using the four ribonucleoside triphosphates as substrates. This chain is DNA-directed RNA polymerase subunit beta, found in Pelargonium hortorum (Common geranium).